A 370-amino-acid polypeptide reads, in one-letter code: MSLHQFLLEPITCHAWNRDRTQIALSPNNHEVHIYKKNGSQWVKAHELKEHNGHITGIDWAPKSDRIVTCGADRNAYVWSQKDGVWKPTLVILRINRAATFVKWSPLENKFAVGSGARLISVCYFESENDWWVSKHIKKPIRSTVLSLDWHPNNVLLAAGSCDFKCRVFSAYIKEVDEKPASTPWGSKMPFGQLMSEFGGSGTGGWVHGVSFSASGSRLAWVSHDSTVSVADASKSVQVSTLKTEFLPLLSVSFVSENSVVAAGHDCCPMLFNYDDRGCLTFVSKLDIPKQSIQRNMSAMERFRNMDKRATTEDRNTALETLHQNSITQVSIYEVDKQDCRKFCTTGIDGAMTIWDFKTLESSIQGLRIM.

WD repeat units lie at residues F6–A45, E50–T89, P140–K179, G202–T241, T244–S284, and L322–Q365.

Belongs to the WD repeat ARPC1 family. Probable component of the Arp2/3 complex in which it may replace ARPC1B. In addition to its role in the cytoplasmic cytoskeleton, the Arp2/3 complex also promotes actin polymerization in the nucleus, thereby regulating gene transcription and repair of damaged DNA.

It localises to the cytoplasm. Its subcellular location is the cytoskeleton. The protein localises to the nucleus. Functionally, probably functions as a component of the Arp2/3 complex which is involved in regulation of actin polymerization and together with an activating nucleation-promoting factor (NPF) mediates the formation of branched actin networks. The sequence is that of Actin-related protein 2/3 complex subunit 1A (ARPC1A) from Homo sapiens (Human).